We begin with the raw amino-acid sequence, 194 residues long: Imidazoleglycerol-phosphate dehydratase (194 aa).

This sequence belongs to the imidazoleglycerol-phosphate dehydratase family.

Its subcellular location is the cytoplasm. The catalysed reaction is D-erythro-1-(imidazol-4-yl)glycerol 3-phosphate = 3-(imidazol-4-yl)-2-oxopropyl phosphate + H2O. It participates in amino-acid biosynthesis; L-histidine biosynthesis; L-histidine from 5-phospho-alpha-D-ribose 1-diphosphate: step 6/9. In Bacillus cereus (strain ATCC 14579 / DSM 31 / CCUG 7414 / JCM 2152 / NBRC 15305 / NCIMB 9373 / NCTC 2599 / NRRL B-3711), this protein is Imidazoleglycerol-phosphate dehydratase.